The sequence spans 613 residues: Myrcene synthase, chloroplastic (613 aa).

A chloroplast-targeting transit peptide spans 1–46 (MQCMAVHQFAPLLSLLNCSRISSDFGRLFTPKTSTKSRSSTCHPIQ). Residues Arg-324, Asp-361, and Asp-365 each coordinate (2E)-geranyl diphosphate. Mg(2+) is bound by residues Asp-361 and Asp-365. Positions 361-365 (DDIYD) match the DDXXD motif motif. The chain crosses the membrane as a helical span at residues 455–475 (IEMAWLSIGGPVILVHAYFCF). (2E)-geranyl diphosphate is bound by residues Arg-503 and Asp-506. Asp-506, Thr-510, and Glu-514 together coordinate Mg(2+).

Belongs to the terpene synthase family. Tpsb subfamily. The cofactor is Mg(2+). Mn(2+) is required as a cofactor. As to expression, expressed in trichomes.

Its subcellular location is the plastid. The protein localises to the chloroplast membrane. The enzyme catalyses (2E)-geranyl diphosphate = beta-myrcene + diphosphate. Its pathway is secondary metabolite biosynthesis; terpenoid biosynthesis. Monoterpene synthase that catalyzes the formation of myrcene. Can use geranyl diphosphate as substrate, but not farnesyl diphosphate or geranylgeranyl diphosphate. This Humulus lupulus (European hop) protein is Myrcene synthase, chloroplastic.